Here is a 124-residue protein sequence, read N- to C-terminus: Mitochondrial zinc maintenance protein 1, mitochondrial (124 aa).

The protein belongs to the complex I LYR family. MZM1 subfamily. As to quaternary structure, interacts with RIP1.

It is found in the mitochondrion matrix. In terms of biological role, assembly factor required for Rieske Fe-S protein RIP1 incorporation into the cytochrome b-c1 (CIII) complex. Functions as a chaperone, binding to this subunit within the mitochondrial matrix and stabilizing it prior to its translocation and insertion into the late CIII dimeric intermediate within the mitochondrial inner membrane. Modulates the mitochondrial matrix zinc pool. The sequence is that of Mitochondrial zinc maintenance protein 1, mitochondrial (MZM1) from Paracoccidioides lutzii (strain ATCC MYA-826 / Pb01) (Paracoccidioides brasiliensis).